The primary structure comprises 229 residues: Matrix protein (229 aa).

A compositionally biased stretch (low complexity) spans Met-1–Ser-12. A disordered region spans residues Met-1–Thr-35. Residues Ser-2–Phe-4 carry the dynamin binding motif. Positions Pro-24 to Tyr-27 match the PPXY motif motif. Residues Pro-37–Pro-40 carry the PTAP/PSAP motif motif.

It belongs to the vesiculoviruses matrix protein family. In terms of assembly, homomultimer. Interacts with viral nucleocapsid; this interaction contributes to the virion assembly. Interacts with the viral envelope glycoprotein; this interaction contributes to the virion assembly. Interacts with host RAE1-NUP98 complex. Interacts with host NEDD4 and TSG101. Interacts with host dynamin. Interacts with host NDUFAF4; the interaction inhibits viral propagation and is independent of interferon activation. Interacts with host GTF2H5; the interaction may inhibit host transcription. Phosphorylated by host.

The protein localises to the virion. The protein resides in the host endomembrane system. Its subcellular location is the host nucleus membrane. It localises to the host nucleus. It is found in the host cytoplasm. In terms of biological role, forms a double layer around the helical nucleocapsid, the inner matrix layer binding to the N helix and the outer matrix layer binding to the envelope glycoprotein. Plays a major role in assembly and budding of virion, by recruiting cellular partners of the ESCRT complexes that play a key role in releasing the budding particle from the host membrane. Condensates the ribonucleocapsid core during virus assembly. Inhibits the host mRNA nuclear export thereby inducing the shut off of cellular transcription and preventing the interferon signaling and the establishment of antiviral state in infected cells. This shutoff presumably inhibits interferon signaling and thus establishment of antiviral state in virus infected cells. Induces cell-rounding, cytoskeleton disorganization and apoptosis in infected cell. Inhibits host transcription, possibly through interaction with host DNA repair factor IIH/TFIIH GTF2H5 subunit. The chain is Matrix protein (M) from Aedes (Bovine).